The following is a 793-amino-acid chain: Neurobeachin (793 aa).

Disordered regions lie at residues 68–92 (ENIK…TGAK) and 685–793 (RETA…EILK). 4 stretches are compositionally biased toward polar residues: residues 77 to 90 (NVST…QTTG), 689 to 710 (RSGS…STET), 750 to 762 (NILN…TSTG), and 782 to 793 (ESLTESPSEILK).

Belongs to the WD repeat neurobeachin family. In terms of assembly, interacts with RII subunit of PKA. In terms of tissue distribution, forebrain and cerebellum.

It localises to the cytoplasm. It is found in the membrane. In terms of biological role, binds to type II regulatory subunits of protein kinase A and anchors/targets them to the membrane. May anchor the kinase to cytoskeletal and/or organelle-associated proteins. This is Neurobeachin (NBEA) from Gallus gallus (Chicken).